The sequence spans 529 residues: Fibroblast growth factor receptor-like 1 (529 aa).

Positions 1–20 are cleaved as a signal peptide; it reads MTRSPALLLLLLGALPSAEA. The Extracellular portion of the chain corresponds to 21–374; the sequence is ARGPPRMADK…SSSSTSLPWP (354 aa). 3 Ig-like C2-type domains span residues 25 to 111, 143 to 233, and 242 to 350; these read PRMA…YTLI, PRFT…YKVD, and PVLT…AFLT. Cysteine 47 and cysteine 95 form a disulfide bridge. Asparagine 107 carries an N-linked (GlcNAc...) asparagine glycan. The interval 116–151 is disordered; the sequence is ISPGKESPGPGGSSGGQEDPASQQWARPRFTQPSKM. An intrachain disulfide couples cysteine 168 to cysteine 217. 3 N-linked (GlcNAc...) asparagine glycosylation sites follow: asparagine 227, asparagine 251, and asparagine 289. A disulfide bond links cysteine 264 and cysteine 334. Residues 375-395 form a helical membrane-spanning segment; it reads VVIGIPAGAVFILGTVLLWLC. Residues 396–529 lie on the Cytoplasmic side of the membrane; the sequence is QTKKKPCAPA…RIENNGGRVS (134 aa). Positions 405–427 are disordered; the sequence is ASTLPVPGHRPPGTSRERSGDKD.

In terms of assembly, interacts with FGF2 with a low affinity. Highly expressed in the kidney, brain and lung. Weakly expressed in the muscle, thymus, lymph node, stomach, intestine, colon and liver. Expressed in fetal cartilaginous structures like the nasal cartilage, the ribs and the sternum as well as in the cartilaginous rudiments of developing bones such as the vertebrae and the pelvic bone. High expression is found in the muscles of the tongue and the diaphragm.

It localises to the cell membrane. Its function is as follows. Has a negative effect on cell proliferation. This is Fibroblast growth factor receptor-like 1 (Fgfrl1) from Mus musculus (Mouse).